The sequence spans 146 residues: Hemoglobin subunit beta (146 aa).

Positions Glu2 to His146 constitute a Globin domain. 2 residues coordinate heme b: His63 and His92.

Belongs to the globin family. As to quaternary structure, heterotetramer of two alpha chains and two beta chains. As to expression, red blood cells.

Its function is as follows. Involved in oxygen transport from gills to the various peripheral tissues. This chain is Hemoglobin subunit beta (hbb), found in Thunnus thynnus (Atlantic bluefin tuna).